Consider the following 319-residue polypeptide: Acetyl-coenzyme A carboxylase carboxyl transferase subunit alpha (319 aa).

In terms of domain architecture, CoA carboxyltransferase C-terminal spans 36-293 (EVERLKTKLE…HDAFLSELDR (258 aa)).

It belongs to the AccA family. In terms of assembly, acetyl-CoA carboxylase is a heterohexamer composed of biotin carboxyl carrier protein (AccB), biotin carboxylase (AccC) and two subunits each of ACCase subunit alpha (AccA) and ACCase subunit beta (AccD).

It is found in the cytoplasm. It carries out the reaction N(6)-carboxybiotinyl-L-lysyl-[protein] + acetyl-CoA = N(6)-biotinyl-L-lysyl-[protein] + malonyl-CoA. The protein operates within lipid metabolism; malonyl-CoA biosynthesis; malonyl-CoA from acetyl-CoA: step 1/1. Its function is as follows. Component of the acetyl coenzyme A carboxylase (ACC) complex. First, biotin carboxylase catalyzes the carboxylation of biotin on its carrier protein (BCCP) and then the CO(2) group is transferred by the carboxyltransferase to acetyl-CoA to form malonyl-CoA. The protein is Acetyl-coenzyme A carboxylase carboxyl transferase subunit alpha of Dichelobacter nodosus (strain VCS1703A).